The primary structure comprises 305 residues: Tyrosine recombinase XerC (305 aa).

Residues 1–93 enclose the Core-binding (CB) domain; the sequence is MVLDGFAAHF…SWRQYCVWLV (93 aa). Residues 114–294 enclose the Tyr recombinase domain; the sequence is RVPKALPQEW…DFDHIARLYD (181 aa). Catalysis depends on residues Arg155, Lys179, His246, Arg249, and His272. Residue Tyr281 is the O-(3'-phospho-DNA)-tyrosine intermediate of the active site.

Belongs to the 'phage' integrase family. XerC subfamily. As to quaternary structure, forms a cyclic heterotetrameric complex composed of two molecules of XerC and two molecules of XerD.

The protein resides in the cytoplasm. In terms of biological role, site-specific tyrosine recombinase, which acts by catalyzing the cutting and rejoining of the recombining DNA molecules. The XerC-XerD complex is essential to convert dimers of the bacterial chromosome into monomers to permit their segregation at cell division. It also contributes to the segregational stability of plasmids. The protein is Tyrosine recombinase XerC of Neisseria meningitidis serogroup C (strain 053442).